Here is a 149-residue protein sequence, read N- to C-terminus: Myoglobin (149 aa).

N-acetylthreonine is present on Thr-2. In terms of domain architecture, Globin spans 2 to 143; the sequence is TEWEHVNKVW…ICSDLETLYK (142 aa). Residue His-60 coordinates nitrite. His-60 lines the O2 pocket. Residue His-89 participates in heme b binding.

This sequence belongs to the globin family. In terms of assembly, monomeric.

It is found in the cytoplasm. The protein resides in the sarcoplasm. It carries out the reaction Fe(III)-heme b-[protein] + nitric oxide + H2O = Fe(II)-heme b-[protein] + nitrite + 2 H(+). The catalysed reaction is H2O2 + AH2 = A + 2 H2O. Its function is as follows. Monomeric heme protein which primary function is to store oxygen and facilitate its diffusion within muscle tissues. Reversibly binds oxygen through a pentacoordinated heme iron and enables its timely and efficient release as needed during periods of heightened demand. Depending on the oxidative conditions of tissues and cells, and in addition to its ability to bind oxygen, it also has a nitrite reductase activity whereby it regulates the production of bioactive nitric oxide. Under stress conditions, like hypoxia and anoxia, it also protects cells against reactive oxygen species thanks to its pseudoperoxidase activity. The protein is Myoglobin (mb) of Heterodontus portusjacksoni (Port Jackson shark).